The primary structure comprises 396 residues: NADH-quinone oxidoreductase subunit D (396 aa).

The protein belongs to the complex I 49 kDa subunit family. In terms of assembly, NDH-1 is composed of 14 different subunits. Subunits NuoB, C, D, E, F, and G constitute the peripheral sector of the complex.

It localises to the cell inner membrane. The enzyme catalyses a quinone + NADH + 5 H(+)(in) = a quinol + NAD(+) + 4 H(+)(out). In terms of biological role, NDH-1 shuttles electrons from NADH, via FMN and iron-sulfur (Fe-S) centers, to quinones in the respiratory chain. The immediate electron acceptor for the enzyme in this species is believed to be ubiquinone. Couples the redox reaction to proton translocation (for every two electrons transferred, four hydrogen ions are translocated across the cytoplasmic membrane), and thus conserves the redox energy in a proton gradient. The chain is NADH-quinone oxidoreductase subunit D from Methylobacterium sp. (strain 4-46).